Reading from the N-terminus, the 438-residue chain is Aspartic proteinase nepenthesin-2 (438 aa).

The first 24 residues, 1-24 (MASPLYSVVLGLAIVSAIVAPTSS), serve as a signal peptide directing secretion. Residues 25-79 (TSRGTLLHHGQKRPQPGLRVDLEQVDSGKNLTKYELIKRAIKRGERRMRSINAML) constitute a propeptide, activation peptide. Asn54 carries N-linked (GlcNAc...) asparagine glycosylation. The 336-residue stretch at 96–431 (YLMNVAIGTP…DLQNLAVSFV (336 aa)) folds into the Peptidase A1 domain. Asp114 is an active-site residue. Cystine bridges form between Cys124–Cys127, Cys130–Cys204, Cys151–Cys169, Cys156–Cys164, Cys241–Cys435, and Cys354–Cys395. Asp315 is an active-site residue.

This sequence belongs to the peptidase A1 family.

The protein resides in the secreted. The enzyme catalyses Similar to pepsin, but also cleaves on either side of Asp and at Lys-|-Arg.. Inhibited by pepstatin and by diazoacetyl-D,L-norleucine methyl ester (DAN) in the presence of Cu(2+) ions. Functionally, extracellular proteinase found in the pitcher fluid of carnivorous plants. Digest prey for nitrogen uptake. The sequence is that of Aspartic proteinase nepenthesin-2 (nep2) from Nepenthes gracilis (Slender pitcher plant).